The chain runs to 880 residues: Potassium transport protein 2 (880 aa).

N-linked (GlcNAc...) asparagine glycosylation is present at Asn-9. A run of 2 helical transmembrane segments spans residues 28 to 48 and 84 to 104; these read FVQD…LYGS and TILL…LTLF. A disordered region spans residues 157-182; sequence MHRPVAPETKAEEAEHQENEKHHRHH. Residues 165–177 show a composition bias toward basic and acidic residues; the sequence is TKAEEAEHQENEK. N-linked (GlcNAc...) asparagine glycans are attached at residues Asn-239, Asn-283, Asn-293, Asn-294, Asn-321, Asn-443, and Asn-460. Residues 289 to 315 are compositionally biased toward polar residues; the sequence is HHLDNNSSISSHNPSLETANDGNQETV. The tract at residues 289–344 is disordered; the sequence is HHLDNNSSISSHNPSLETANDGNQETVSSSNSNYSTTRVDNDPHVASYSPQNSNFD. Residues 316–325 show a composition bias toward low complexity; that stretch reads SSSNSNYSTT. The next 6 helical transmembrane spans lie at 494 to 514, 571 to 591, 625 to 645, 684 to 704, 756 to 776, and 787 to 807; these read ILVV…LIFI, LIFL…WIMI, WVLF…FMVL, IAPA…YPIA, QLSH…IVEG, and FTLF…GLSL. The segment at 857–880 is disordered; sequence REEEDYMRRHGKKNTNRADPVPSS.

This sequence belongs to the TrkH potassium transport family.

The protein localises to the cell membrane. In terms of biological role, together with TRK1, defines the major, high-affinity potassium influx transport system. Involved in maintenance of the proper sodium/potassium ratio in the cell and in regulating the plasma membrane potential. The chain is Potassium transport protein 2 (trk2) from Schizosaccharomyces pombe (strain 972 / ATCC 24843) (Fission yeast).